The chain runs to 229 residues: MRRTKIVVPIMLTELTELEKVSVSDYHSADIVEWRADFLSADDIFEMAPKFFEKFKESKILFTLRTVREGGNIQVSEKKYLQILQEILKFDPDYIDVEYFSHGPSFAALKNYREKIVLSYHNFDEVPTDLTSRLIKMHEEGTAFVKVAVMPERECDVLDLLQITRDMTLEYGNHFISMAMGDLGRLSRISGYLTGSCWTFASLENSSAPGQISLKETVEILDLLENELA.

3-dehydroquinate-binding positions include 33 to 35 (EWR) and R65. H121 serves as the catalytic Proton donor/acceptor. K146 functions as the Schiff-base intermediate with substrate in the catalytic mechanism. 3 residues coordinate 3-dehydroquinate: R188, S207, and Q211.

This sequence belongs to the type-I 3-dehydroquinase family. As to quaternary structure, homodimer.

It carries out the reaction 3-dehydroquinate = 3-dehydroshikimate + H2O. The protein operates within metabolic intermediate biosynthesis; chorismate biosynthesis; chorismate from D-erythrose 4-phosphate and phosphoenolpyruvate: step 3/7. Its function is as follows. Involved in the third step of the chorismate pathway, which leads to the biosynthesis of aromatic amino acids. Catalyzes the cis-dehydration of 3-dehydroquinate (DHQ) and introduces the first double bond of the aromatic ring to yield 3-dehydroshikimate. This is 3-dehydroquinate dehydratase from Lactococcus lactis subsp. cremoris (strain MG1363).